The chain runs to 504 residues: Cytochrome P450 2K1 (504 aa).

Heme is bound at residue C447.

Belongs to the cytochrome P450 family. Heme serves as cofactor.

It localises to the endoplasmic reticulum membrane. The protein localises to the microsome membrane. The enzyme catalyses an organic molecule + reduced [NADPH--hemoprotein reductase] + O2 = an alcohol + oxidized [NADPH--hemoprotein reductase] + H2O + H(+). This chain is Cytochrome P450 2K1 (cyp2k1), found in Oncorhynchus mykiss (Rainbow trout).